The following is a 143-amino-acid chain: Nucleoside diphosphate kinase (143 aa).

Positions 11, 59, 87, 93, 104, and 114 each coordinate ATP. Catalysis depends on histidine 117, which acts as the Pros-phosphohistidine intermediate.

It belongs to the NDK family. As to quaternary structure, homotetramer. The cofactor is Mg(2+).

Its subcellular location is the cytoplasm. It catalyses the reaction a 2'-deoxyribonucleoside 5'-diphosphate + ATP = a 2'-deoxyribonucleoside 5'-triphosphate + ADP. The catalysed reaction is a ribonucleoside 5'-diphosphate + ATP = a ribonucleoside 5'-triphosphate + ADP. Functionally, major role in the synthesis of nucleoside triphosphates other than ATP. The ATP gamma phosphate is transferred to the NDP beta phosphate via a ping-pong mechanism, using a phosphorylated active-site intermediate. The chain is Nucleoside diphosphate kinase from Pseudoalteromonas atlantica (strain T6c / ATCC BAA-1087).